We begin with the raw amino-acid sequence, 149 residues long: MADQLTEEQIAEFKEAFSLFDKDGDGTITTKELGTVMRSLGQNPTEAELQDMINEVDADGNGTIDFPEFLTMMAKKMKDTDSEEEIREAFRVFDKDGNGYISAAELRHVMTNLGEKLTDEEVDEMIREADIDGDGQVNYEEFVQMMTAK.

Ala2 is modified (N-acetylalanine). EF-hand domains follow at residues 8-43 (EQIA…LGQN), 44-79 (PTEA…KMKD), 81-116 (DSEE…LGEK), and 117-149 (LTDE…MTAK). Ca(2+)-binding residues include Asp21, Asp23, Asp25, Thr27, Glu32, Asp57, Asp59, Asn61, Thr63, Glu68, Asp94, Asp96, Asn98, Tyr100, and Glu105. Residue Lys116 is modified to N6,N6,N6-trimethyllysine. Residues Asp130, Asp132, Asp134, Gln136, and Glu141 each contribute to the Ca(2+) site.

This sequence belongs to the calmodulin family.

Its function is as follows. Calmodulin acts as part of a calcium signal transduction pathway by mediating the control of a large number of enzymes, ion channels, aquaporins and other proteins through calcium-binding. Calcium-binding is required for the activation of calmodulin. Among the enzymes to be stimulated by the calmodulin-calcium complex are a number of protein kinases, such as myosin light-chain kinases and calmodulin-dependent protein kinase type II (CaMK2), and phosphatases. This Electrophorus electricus (Electric eel) protein is Calmodulin (calm).